Here is a 394-residue protein sequence, read N- to C-terminus: Protein NDRG1 (394 aa).

Ser2 is subject to N-acetylserine. Ser2, Ser319, and Ser326 each carry phosphoserine. The disordered stretch occupies residues Arg325 to Cys394. A compositionally biased stretch (polar residues) spans Arg327 to Gly339. Residue Thr328 is modified to Phosphothreonine; by SGK1. Ser330 and Ser332 each carry phosphoserine; by SGK1. Ser333 carries the phosphoserine modification. Thr335 bears the Phosphothreonine mark. Ser336 bears the Phosphoserine mark. Tandem repeats lie at residues Gly339–Glu348, Gly349–Glu358, and Gly359–Glu368. The tract at residues Gly339–Glu368 is 3 X 10 AA tandem repeats of G-T-R-S-R-S-H-T-S-E. Thr340 carries the post-translational modification Phosphothreonine. Ser342 carries the post-translational modification Phosphoserine. The span at His345–His371 shows a compositional bias: basic and acidic residues. Thr346 is modified (phosphothreonine; by SGK1). Phosphoserine is present on Ser352. Thr356 carries the post-translational modification Phosphothreonine; by SGK1. Ser362 is subject to Phosphoserine. Ser364 is modified (phosphoserine; by SGK1). Thr366 carries the phosphothreonine; by SGK1 modification. Thr375 is subject to Phosphothreonine.

Belongs to the NDRG family. As to quaternary structure, interacts with RAB4A (membrane-bound form); the interaction involves NDRG1 in vesicular recycling of CDH1. Under stress conditions, phosphorylated in the C-terminal on many serine and threonine residues. Phosphorylated in vitro by PKA. Phosphorylation enhanced by increased intracellular cAMP levels. Homocysteine induces dephosphorylation. Phosphorylation by SGK1 is cell cycle dependent. Ubiquitous; expressed most prominently in placental membranes and prostate, kidney, small intestine, and ovary tissues. Also expressed in heart, brain, skeletal muscle, lung, liver and pancreas. Low levels in peripheral blood leukocytes and in tissues of the immune system. Expressed mainly in epithelial cells. Also found in Schwann cells of peripheral neurons. Reduced expression in adenocarcinomas compared to normal tissues. In colon, prostate and placental membranes, the cells that border the lumen show the highest expression.

The protein resides in the cytoplasm. Its subcellular location is the cytosol. The protein localises to the cytoskeleton. It is found in the microtubule organizing center. It localises to the centrosome. The protein resides in the nucleus. Its subcellular location is the cell membrane. Stress-responsive protein involved in hormone responses, cell growth, and differentiation. Acts as a tumor suppressor in many cell types. Necessary but not sufficient for p53/TP53-mediated caspase activation and apoptosis. Has a role in cell trafficking, notably of the Schwann cell, and is necessary for the maintenance and development of the peripheral nerve myelin sheath. Required for vesicular recycling of CDH1 and TF. May also function in lipid trafficking. Protects cells from spindle disruption damage. Functions in p53/TP53-dependent mitotic spindle checkpoint. Regulates microtubule dynamics and maintains euploidy. This chain is Protein NDRG1 (NDRG1), found in Homo sapiens (Human).